Reading from the N-terminus, the 341-residue chain is Abnormal cell lineage protein 44 (341 aa).

Residues 1–21 (MRALYFRTTTLSTFFILCSLA) form the signal peptide. 11 disulfide bridges follow: Cys84/Cys95, Cys134/Cys142, Cys144/Cys158, Cys206/Cys220, Cys208/Cys215, Cys265/Cys292, Cys275/Cys287, Cys291/Cys331, Cys307/Cys322, Cys309/Cys319, and Cys314/Cys315. A lipid anchor (O-palmitoleoyl serine; by mom-1) is attached at Ser212. Asn279 carries an N-linked (GlcNAc...) asparagine glycan.

Belongs to the Wnt family. Palmitoleoylation is required for efficient binding to frizzled receptors. Depalmitoleoylation leads to Wnt signaling pathway inhibition.

Its subcellular location is the secreted. The protein localises to the extracellular space. The protein resides in the extracellular matrix. Functionally, ligand for members of the frizzled family of seven transmembrane receptors. Affects male tail development, vulval precursor cell specification and egg laying. Involved in morphogenesis by influencing polarity of asymmetric cell divisions of the B, U, and F cells in the male, and the T cell in males and hermaphrodites. Controls spindle orientation in B-gamma cell division during male copulatory spicule development. Involved in specification of the P7.p lineage during vulval development. Has a role in providing polarity and default lin-17 localization in axon development and positioning of neuromuscular synapses in DA9 regions by negatively regulating synaptogenesis. This is Abnormal cell lineage protein 44 from Caenorhabditis briggsae.